We begin with the raw amino-acid sequence, 338 residues long: Methionine import ATP-binding protein MetN (338 aa).

Residues 2 to 241 (ISLDGIRKVF…PKEHITKEFV (240 aa)) enclose the ABC transporter domain. Position 38–45 (38–45 (GYSGAGKS)) interacts with ATP.

This sequence belongs to the ABC transporter superfamily. Methionine importer (TC 3.A.1.24) family. The complex is composed of two ATP-binding proteins (MetN), two transmembrane proteins (MetI) and a solute-binding protein (MetQ).

It is found in the cell membrane. It catalyses the reaction L-methionine(out) + ATP + H2O = L-methionine(in) + ADP + phosphate + H(+). It carries out the reaction D-methionine(out) + ATP + H2O = D-methionine(in) + ADP + phosphate + H(+). In terms of biological role, part of the ABC transporter complex MetNIQ involved in methionine import. Responsible for energy coupling to the transport system. The polypeptide is Methionine import ATP-binding protein MetN (Halalkalibacterium halodurans (strain ATCC BAA-125 / DSM 18197 / FERM 7344 / JCM 9153 / C-125) (Bacillus halodurans)).